Reading from the N-terminus, the 230-residue chain is Ribosome-recycling factor, mitochondrial (230 aa).

The transit peptide at 1–24 (MILTTARLNCRPVTVPRLFNRSFS) directs the protein to the mitochondrion.

It belongs to the RRF family.

Its subcellular location is the mitochondrion. Functionally, necessary for protein synthesis in mitochondria. Functions as a ribosome recycling factor in mitochondria. The protein is Ribosome-recycling factor, mitochondrial (RRF1) of Saccharomyces cerevisiae (strain ATCC 204508 / S288c) (Baker's yeast).